The sequence spans 3855 residues: Replicase polyprotein 1ab (3855 aa).

A C4-type; atypical zinc finger spans residues 8-28; it reads CMCTPAARVFWNAGQVFCTRC. The 112-residue stretch at 69–180 folds into the Peptidase C31 domain; the sequence is ECTPSGCCWL…QPFCPFEEAH (112 aa). Residues 69–182 form a PCP1-alpha region; it reads ECTPSGCCWL…FCPFEEAHSS (114 aa). Active-site for nsp1-alpha papain-like cysteine proteinase activity residues include Cys-76 and His-146. The interval 203 to 204 is important for host EIF2AK2 inhibition; the sequence is MM. The segment at 269–384 is PCP1-beta; it reads PDVFDGKCWL…IFRFGAHKWY (116 aa). Residues 269 to 385 enclose the Peptidase C32 domain; the sequence is PDVFDGKCWL…FRFGAHKWYG (117 aa). Catalysis depends on for nsp1-beta papain-like cysteine proteinase activity residues Cys-276 and His-345. Residues 418-505 are OTU-like; the sequence is ITTYSPPTDG…GVHWEVEVRS (88 aa). The Peptidase C33 domain maps to 420–527; that stretch reads TYSPPTDGSC…VGVCSEGCVA (108 aa). Catalysis depends on for nsp2 cysteine proteinase activity residues Cys-429 and His-498. Disordered regions lie at residues 752–797 and 1047–1088; these read PSDP…DAGA and PPPK…SRVS. Over residues 775-790 the composition is skewed to polar residues; that stretch reads APASTTTLVREQTPDN. The next 3 membrane-spanning stretches (helical) occupy residues 1134–1154, 1179–1199, and 1252–1272; these read GSMA…LLLC, GVFG…SNPV, and WHVL…VYVV. Positions 1149 to 1272 are HD1; it reads LALLLCRSYP…DLALSLVYVV (124 aa). A WCCH region spans residues 1327–1351; sequence TGWRGCWRGESPIHQPHQKPIAYAN. The next 5 helical transmembrane spans lie at 1468–1488, 1521–1541, 1543–1563, 1573–1593, and 1609–1629; these read LAVA…LWFT, LCVS…QLSG, EVGI…RMAL, AFCA…PILL, and FLVF…GLLW. The tract at residues 1468–1629 is HD2; it reads LAVAQVSAWT…LSLGITGLLW (162 aa). In terms of domain architecture, Peptidase S32 spans 1694-1896; that stretch reads GAFRTHKPCL…SLLASVPVVE (203 aa). Active-site charge relay system; for serine protease nsp4 activity residues include His-1732, Asp-1757, and Ser-1810. The next 4 membrane-spanning stretches (helical) occupy residues 1919-1939, 1943-1963, 1977-1997, and 2020-2040; these read WTPI…AVLV, FSFA…VLMI, LAFY…TFAG, and SCVP…LWLF. The HD3 stretch occupies residues 1919-2040; that stretch reads WTPIVAVGFF…HTLGVILWLF (122 aa). Residues 2381–2544 enclose the NiRAN domain; that stretch reads IISQLQGLTT…LPYKLYPVRG (164 aa). Residues 2783–2917 enclose the RdRp catalytic domain; it reads GRCLEADLAS…YAERPTFPNY (135 aa). Residues 3038-3101 form the AV ZBD domain; sequence GKKFRHCGIC…SPVGAGRSPL (64 aa). Zn(2+) is bound by residues Cys-3044, Cys-3047, Cys-3057, Cys-3062, His-3065, His-3067, His-3069, His-3071, Cys-3078, His-3080, Cys-3087, and Cys-3090. The (+)RNA virus helicase ATP-binding domain maps to 3151–3310; it reads DLSDGDYQVV…VFDQMPQKQL (160 aa). Residue 3186–3193 participates in ATP binding; that stretch reads GPPGSGKT. Residues 3311–3440 enclose the (+)RNA virus helicase C-terminal domain; it reads TTIYRFGPNI…FSRGDELVVL (130 aa). The 98-residue stretch at 3479 to 3576 folds into the AV-Nsp11N/CoV-Nsp15M domain; sequence EGSCMPLPQV…LTLYIRGEPQ (98 aa). The NendoU domain occupies 3578-3700; it reads LPETLVSTGR…MVWKGATAYF (123 aa). Catalysis depends on residues His-3609, His-3624, and Lys-3653.

This sequence belongs to the arteriviridae polyprotein family. In terms of assembly, nsp1-alpha papain-like: Interacts with host RNF31. Interacts with host EIF2AK2; this interaction occurs in host stress granules and leads to EIF2AK2 inhibition. Interacts with host G3BP1; this interaction probably plays a role in Nsp1-beta-mediated inhibition of host EIF2AK2. As to quaternary structure, interacts with host DDX18; this interaction redistributes host DDX18 to the cytoplasm. In terms of assembly, interacts with host IFITM1. Interacts with host DDX5. As to quaternary structure, interacts with host OTULIN. In terms of assembly, interacts with host LGALS3. Specific enzymatic cleavages in vivo by its own proteases yield mature proteins. Nsp1 is autocleaved into two subunits, Nsp1-alpha and Nsp1-beta. There are two alternative pathways for processing. Either nsp4-5 is cleaved, which represents the major pathway or the nsp5-6 and nsp6-7 are processed, which represents the minor pathway. The major pathway occurs when nsp2 acts as a cofactor for nsp4.

It localises to the host nucleus. Its subcellular location is the host cytoplasm. It is found in the host membrane. The protein localises to the host endoplasmic reticulum. The protein resides in the host perinuclear region. The catalysed reaction is RNA(n) + a ribonucleoside 5'-triphosphate = RNA(n+1) + diphosphate. It carries out the reaction ATP + H2O = ADP + phosphate + H(+). It catalyses the reaction Thiol-dependent hydrolysis of ester, thioester, amide, peptide and isopeptide bonds formed by the C-terminal Gly of ubiquitin (a 76-residue protein attached to proteins as an intracellular targeting signal).. The enzyme catalyses uridylyl-uridylyl-ribonucleotide-RNA = a 3'-end uridylyl-2',3'-cyclophospho-uridine-RNA + a 5'-end dephospho-ribonucleoside-RNA. Its function is as follows. Contains the activities necessary for the transcription of negative stranded RNA, leader RNA, subgenomic mRNAs and progeny virion RNA as well as proteinases responsible for the cleavage of the polyprotein into functional products. In terms of biological role, inhibits host IFN-beta production. Plays a role in the degradation of the host transcriptional activator CREBBP protein. The degradation of host CREBBP which is a key component of the IFN enhanceosome is likely responsible for the inhibition of interferon mediated by Nsp1-alpha. Also participates in the inhibition of host NF-kappa-B activation by counteracting LUBAC-dependent induction of NF-kappa-B. Reduces host NEMO ubiquitination by blocking the interaction between the two LUBAC complex components RNF31 and SHARPIN. Plays a role in blocking host mRNA nuclear export to the cytoplasm and subversion of host protein synthesis. Additionally, inhibits the interferon-activated JAK/STAT signal transduction by mediating the ubiquitination and subsequent proteasomal degradation of host KPNA1. Repurposes the host antiviral stress granules into a proviral platform to counteract the EIF2AK2/PKR restriction, thereby regulating the host inflammatory response. Functionally, multifunctional protein that acts as a viral protease and as a viral antagonist of host immune response. Cleaves the nsp2/nsp3 site in the viral polyprotein. Displays deubiquitinating activity that cleaves both ubiquitinated and ISGylated products and therefore inhibits ubiquitin and ISG15-dependent host innate immunity. Also deubiquinates host NFKBIA, thereby interfering with NFKBIA degradation and impairing subsequent NF-kappa-B activation. Its function is as follows. Plays a role in the inhibition of the immune response by interacting with host IFITM1. This interaction leads to the proteasomal degradation of the IFN-induced antiviral protein IFITM1. In terms of biological role, cleaves the majority of cleavage sites present in the C-terminus of the polyprotein. Triggers host apoptosis through caspase-3, -8, and -9 activations. Subverts host innate immune responses through its protease activity. Targets the NF-kappa-B essential modulator NEMO and mediates its cleavage. Blocks host interferon beta induction and downstream signaling by cleaving mitochondrial MAVS, dislodging it from the mitochondria. Impairs host defense by cleaving host mRNA-decapping enzyme DCP1A to attenuate its antiviral activity. Plays a role in the initial induction of autophagosomes from host endoplasmic reticulum. Functionally, plays a role in the inhibition of host STAT3 signaling pathway by inducing the degradation of STAT3. Its function is as follows. Responsible for replication and transcription of the viral RNA genome. In terms of biological role, displays RNA and DNA duplex-unwinding activities with 5' to 3' polarity. Plays a role in viral transcription/replication and prevents the simultaneous activation of host cell dsRNA sensors, such as MDA5/IFIH1, OAS, PKR and NLRP3 inflammasome. Acts by degrading the 5'-polyuridines generated during replication of the poly(A) region of viral genomic and subgenomic RNAs. Catalyzes a two-step reaction in which a 2'3'-cyclic phosphate (2'3'-cP) is first generated by 2'-O transesterification, which is then hydrolyzed to a 3'-phosphate (3'-P). If not degraded, poly(U) RNA would hybridize with poly(A) RNA tails and activate host dsRNA sensors. Also plays a role in the inhibition of host type I interferon production by recruiting host OTULIN to promote removal of linear ubiquitination targeting host NEMO. The sequence is that of Replicase polyprotein 1ab (rep) from Sus scrofa (Pig).